A 305-amino-acid chain; its full sequence is Protein hrde-2 (305 aa).

Disordered stretches follow at residues 211–233 and 267–305; these read AEMV…PVPA and EMSN…EYCQ. Residues 215 to 227 show a composition bias toward polar residues; the sequence is PSNTTGSSGSPMS. Positions 268-287 are enriched in acidic residues; the sequence is MSNDEYSPDESENDENEYDY. A compositionally biased stretch (basic and acidic residues) spans 289–305; the sequence is NAARYDDGYDEGHEYCQ.

In terms of tissue distribution, expressed throughout the male and female germline.

It is found in the nucleus. Plays a role in germline RNA interference (RNAi), and in particular is required for piwi-interacting RNA (piRNA) gene silencing. Facilitates the binding of the argonaut protein hrde-1 to small interfering RNAs (siRNAs) targets that are required for transgenerational epigenetic inheritance and germline immortality. The protein is Protein hrde-2 of Caenorhabditis elegans.